Reading from the N-terminus, the 443-residue chain is Thymidine phosphorylase (443 aa).

Belongs to the thymidine/pyrimidine-nucleoside phosphorylase family. Homodimer.

It carries out the reaction thymidine + phosphate = 2-deoxy-alpha-D-ribose 1-phosphate + thymine. Its pathway is pyrimidine metabolism; dTMP biosynthesis via salvage pathway; dTMP from thymine: step 1/2. The enzymes which catalyze the reversible phosphorolysis of pyrimidine nucleosides are involved in the degradation of these compounds and in their utilization as carbon and energy sources, or in the rescue of pyrimidine bases for nucleotide synthesis. In Shewanella frigidimarina (strain NCIMB 400), this protein is Thymidine phosphorylase.